The sequence spans 881 residues: Alanine--tRNA ligase (881 aa).

Residues histidine 564, histidine 568, cysteine 673, and histidine 677 each coordinate Zn(2+). A disordered region spans residues 848-867 (GQGGGGRPDMAQAGGPDGDK).

It belongs to the class-II aminoacyl-tRNA synthetase family. Zn(2+) serves as cofactor.

The protein resides in the cytoplasm. The enzyme catalyses tRNA(Ala) + L-alanine + ATP = L-alanyl-tRNA(Ala) + AMP + diphosphate. Its function is as follows. Catalyzes the attachment of alanine to tRNA(Ala) in a two-step reaction: alanine is first activated by ATP to form Ala-AMP and then transferred to the acceptor end of tRNA(Ala). Also edits incorrectly charged Ser-tRNA(Ala) and Gly-tRNA(Ala) via its editing domain. This Hyphomonas neptunium (strain ATCC 15444) protein is Alanine--tRNA ligase.